A 523-amino-acid chain; its full sequence is 2-oxopropyl-CoM reductase, carboxylating (523 aa).

Residue 53–54 (AA) coordinates FAD. Arg56 serves as a coordination point for 2-oxopropyl-coenzyme M. FAD is bound at residue Ser81. Position 82 (Cys82) interacts with 2-oxopropyl-coenzyme M. Cys82 and Cys87 form a disulfide bridge. Ala158 is an FAD binding site. Residues 222-225 (GSKT) and 245-246 (RT) contribute to the NADP(+) site. Asp353 lines the FAD pocket. An NADP(+)-binding site is contributed by Glu360. Met361 provides a ligand contact to FAD. 2-oxopropyl-coenzyme M is bound at residue Arg365. Phe501 lines the FAD pocket.

It belongs to the class-I pyridine nucleotide-disulfide oxidoreductase family. As to quaternary structure, homodimer. Component II of the aliphatic epoxide carboxylation complex together with components I, III and IV. It depends on FAD as a cofactor.

It carries out the reaction coenzyme M + acetoacetate + NADP(+) = 2-oxopropyl-coenzyme M + CO2 + NADPH. The protein operates within alkene metabolism; propylene degradation. Its activity is regulated as follows. Inhibited (at 40%) by the coenzyme M analog 2-bromoethanesulfonate (BES). BES is a time-dependent inactivator of dithiothreitol-reduced 2-KPCC, where the redox active cysteines are in the free thiol forms. BES does not inactivate air-oxidized 2-KPCC, where the redox active cysteine pair is in the disulfide form. BES specifically alkylates the interchange thiol that facilitates thioether bond cleavage and enolacetone formation during catalysis. Functionally, involved in aliphatic epoxide carboxylation. Catalyzes the reductive cleavage of the thioether bond of 2-oxopropyl-coenzyme M (2-KPC), and the subsequent carboxylation of the ketopropyl cleavage product, yielding the products acetoacetate and free coenzyme M. This is 2-oxopropyl-CoM reductase, carboxylating from Xanthobacter autotrophicus (strain ATCC BAA-1158 / Py2).